Here is a 590-residue protein sequence, read N- to C-terminus: Aspartate--tRNA(Asp/Asn) ligase (590 aa).

E175 lines the L-aspartate pocket. Positions Q199–K202 are aspartate. The L-aspartate site is built by R221 and H450. R221–E223 lines the ATP pocket. E484 lines the ATP pocket. Residue R491 participates in L-aspartate binding. G536–R539 is a binding site for ATP.

The protein belongs to the class-II aminoacyl-tRNA synthetase family. Type 1 subfamily. As to quaternary structure, homodimer.

The protein resides in the cytoplasm. The enzyme catalyses tRNA(Asx) + L-aspartate + ATP = L-aspartyl-tRNA(Asx) + AMP + diphosphate. Aspartyl-tRNA synthetase with relaxed tRNA specificity since it is able to aspartylate not only its cognate tRNA(Asp) but also tRNA(Asn). Reaction proceeds in two steps: L-aspartate is first activated by ATP to form Asp-AMP and then transferred to the acceptor end of tRNA(Asp/Asn). This is Aspartate--tRNA(Asp/Asn) ligase from Rhodopseudomonas palustris (strain BisA53).